The following is a 386-amino-acid chain: Glycerate dehydrogenase HPR, peroxisomal (386 aa).

NAD(+)-binding positions include 175–176, 271–273, and Asp297; these read RI and CSR. Arg273 is an active-site residue. Glu302 is a catalytic residue. The active-site Proton donor is His320. Residue 320–323 coordinates NAD(+); it reads HIAS. Residues 384-386 carry the Microbody targeting signal motif; it reads SKL.

This sequence belongs to the D-isomer specific 2-hydroxyacid dehydrogenase family. Present in leaves (at protein level). Mostly expressed in photosynthetic tissues such as leaves, stems, flowers, buds, and, to a lower extent, in siliques and roots.

Its subcellular location is the peroxisome. It catalyses the reaction (R)-glycerate + NAD(+) = 3-hydroxypyruvate + NADH + H(+). The protein operates within photosynthesis; photorespiration; 3-phospho-D-glycerate from glycine: step 3/4. Its activity is regulated as follows. Slightly inhibited by oxalate. Functionally, catalyzes the NADH-dependent reduction of hydroxypyruvate into glycerate in the photorespiratory core cycle. Mediates fatty acid beta-oxidation in germinating seeds when malate dehydrogenase is absent. In Arabidopsis thaliana (Mouse-ear cress), this protein is Glycerate dehydrogenase HPR, peroxisomal (HPR).